Consider the following 321-residue polypeptide: Aspartate carbamoyltransferase catalytic subunit (321 aa).

Arg64 and Thr65 together coordinate carbamoyl phosphate. Lys92 serves as a coordination point for L-aspartate. Residues Arg114, His144, and Gln147 each contribute to the carbamoyl phosphate site. Residues Arg177 and Arg232 each coordinate L-aspartate. 2 residues coordinate carbamoyl phosphate: Gly273 and Pro274.

This sequence belongs to the aspartate/ornithine carbamoyltransferase superfamily. ATCase family. Heterododecamer (2C3:3R2) of six catalytic PyrB chains organized as two trimers (C3), and six regulatory PyrI chains organized as three dimers (R2).

The enzyme catalyses carbamoyl phosphate + L-aspartate = N-carbamoyl-L-aspartate + phosphate + H(+). Its pathway is pyrimidine metabolism; UMP biosynthesis via de novo pathway; (S)-dihydroorotate from bicarbonate: step 2/3. In terms of biological role, catalyzes the condensation of carbamoyl phosphate and aspartate to form carbamoyl aspartate and inorganic phosphate, the committed step in the de novo pyrimidine nucleotide biosynthesis pathway. The protein is Aspartate carbamoyltransferase catalytic subunit of Alkalilimnicola ehrlichii (strain ATCC BAA-1101 / DSM 17681 / MLHE-1).